The following is a 157-amino-acid chain: ATP synthase subunit b (157 aa).

Residues 1–21 traverse the membrane as a helical segment; the sequence is MHFLDESFWLAISFIIFVYLI.

The protein belongs to the ATPase B chain family. In terms of assembly, F-type ATPases have 2 components, F(1) - the catalytic core - and F(0) - the membrane proton channel. F(1) has five subunits: alpha(3), beta(3), gamma(1), delta(1), epsilon(1). F(0) has three main subunits: a(1), b(2) and c(10-14). The alpha and beta chains form an alternating ring which encloses part of the gamma chain. F(1) is attached to F(0) by a central stalk formed by the gamma and epsilon chains, while a peripheral stalk is formed by the delta and b chains.

Its subcellular location is the cell inner membrane. Its function is as follows. F(1)F(0) ATP synthase produces ATP from ADP in the presence of a proton or sodium gradient. F-type ATPases consist of two structural domains, F(1) containing the extramembraneous catalytic core and F(0) containing the membrane proton channel, linked together by a central stalk and a peripheral stalk. During catalysis, ATP synthesis in the catalytic domain of F(1) is coupled via a rotary mechanism of the central stalk subunits to proton translocation. Functionally, component of the F(0) channel, it forms part of the peripheral stalk, linking F(1) to F(0). This is ATP synthase subunit b from Rickettsia bellii (strain RML369-C).